We begin with the raw amino-acid sequence, 192 residues long: Ion-translocating oxidoreductase complex subunit A (192 aa).

6 helical membrane passes run leucine 5–leucine 25, isoleucine 39–valine 59, leucine 72–valine 92, alanine 102–leucine 122, alanine 134–methionine 154, and alanine 171–valine 191.

The protein belongs to the NqrDE/RnfAE family. The complex is composed of six subunits: RnfA, RnfB, RnfC, RnfD, RnfE and RnfG.

Its subcellular location is the cell inner membrane. Functionally, part of a membrane-bound complex that couples electron transfer with translocation of ions across the membrane. The protein is Ion-translocating oxidoreductase complex subunit A of Shewanella amazonensis (strain ATCC BAA-1098 / SB2B).